The primary structure comprises 1002 residues: Solute carrier family 12 member 3 (1002 aa).

Residues 1 to 135 lie on the Cytoplasmic side of the membrane; the sequence is MAELPVTELP…KSPGEPVRFG (135 aa). Ser41 carries the post-translational modification Phosphoserine. A Phosphothreonine modification is found at Thr44. Residue Ser47 is modified to Phosphoserine. 3 positions are modified to phosphothreonine: Thr48, Thr53, and Thr58. Phosphoserine is present on residues Ser71 and Ser89. Position 122 is a phosphothreonine (Thr122). Ser124 carries the phosphoserine modification. Residues 136–165 form a discontinuously helical membrane-spanning segment; the sequence is WVKGVMIRCMLNIWGVILYLRLPWITAQAG. Na(+) contacts are provided by Leu146 and Trp149. The helical transmembrane segment at 166–187 threads the bilayer; sequence IVLTWLIILLSVMVTSITGLSI. The Cytoplasmic segment spans residues 188-218; the sequence is SAISTNGKVKSGGTYFLISRSLGPELGGSIG. Residues 219–241 form a helical membrane-spanning segment; that stretch reads LIFAFANAVGVAMHTVGFAETVR. Topologically, residues 242–253 are extracellular; that stretch reads DLLQEYGTPIVD. Transmembrane regions (helical) follow at residues 254 to 278 and 279 to 301; these read PIND…AGME and WESK…YLVG. Topologically, residues 302–336 are extracellular; the sequence is TLIPASEDKASKGFYSYHGDIFVQNLVPDWRGIDG. Residues 337–358 traverse the membrane as a discontinuously helical segment; sequence SFFGMFSIFFPSATGILAGANI. 3 residues coordinate chloride: Gly351, Ile352, and Leu353. Topologically, residues 359-369 are cytoplasmic; sequence SGDLKDPAVAI. Residues 370 to 391 traverse the membrane as a helical segment; it reads PKGTLMAIFWTTISYLAISATI. Residues 392 to 451 are Extracellular-facing; it reads GSCVVRDASGDVNDTMTPGPGPCEGLACGYGWNFTECSQQRSCRYGLINYYQTMSMVSAF. Asn404 carries an N-linked (GlcNAc...) asparagine glycan. Cys414 and Cys419 form a disulfide bridge. Asn424 carries N-linked (GlcNAc...) asparagine glycosylation. A disulfide bond links Cys428 and Cys434. Residues 452–475 traverse the membrane as a helical segment; the sequence is APLITAGIFGATLSSALACLVSAA. Na(+) contacts are provided by Ala462, Ser465, and Ser466. The Cytoplasmic segment spans residues 476-505; it reads KVFQCLCEDQLYPLIGFFGKGYGKNREPVR. The chain crosses the membrane as a helical span at residues 506 to 520; sequence GYLLAYAIAVAFIII. Over 521 to 525 the chain is Extracellular; it reads AELNT. Residues 526–542 traverse the membrane as a helical segment; that stretch reads IAPIISNFFLCSYALIN. Tyr538 serves as a coordination point for chloride. The Cytoplasmic portion of the chain corresponds to 543-565; sequence FSCFHASITNSPGWRPSFRYYSK. Helical transmembrane passes span 566-585 and 586-597; these read WAAL…LTWW and AALIAIGVVLFL. The Cytoplasmic portion of the chain corresponds to 598–1002; it reads LLYVIYKKPE…QENVLTFYCQ (405 aa). The interval 613 to 628 is scissor helix; the sequence is SVQAGSYNLALSYSVG. Positions 646, 653, 675, 739, 778, and 779 each coordinate ATP.

The protein belongs to the SLC12A transporter family. As to quaternary structure, homodimer; adopts a domain-swap conformation at the scissor helices connecting the transmembrane domain and C-terminal domain. Interacts with KLHL3. Interacts with IL18R1; this interaction is increased by IL18 treatment. In terms of processing, ubiquitinated; ubiquitination is essential for regulation of endocytosis. Post-translationally, phosphorylated at Thr-53, Thr-58 and Ser-71 by OXSR1/OSR1 and STK39/SPAK downstream of WNK4, promoting its activity. Phosphorylated in response to IL18. In terms of tissue distribution, expressed predominantly in kidney, including in distal tubules (at protein level). Detected at low levels in heart, lung and liver. Not detected in normal aorta, but abundantly expressed in fatty streaks and advanced atherosclerotic lesions. In atherosclerotic lesions, expressed in macrophages, smooth muscle cells and endothelial cells (at protein level).

It is found in the cell membrane. It localises to the apical cell membrane. The enzyme catalyses chloride(out) + Na(+)(out) = chloride(in) + Na(+)(in). Phosphorylation by OXSR1/OSR1 and STK39/SPAK in kidney distal convoluted tubules promotes its activity. Also activated by OXSR1/OSR1 and STK39/SPAK downstream of WNK3. Inhibited by thiazide-type diuretic metolazone. Thiazide drugs, such as polythiazide, specifically inhibit SLC12A3/NCC transporter activity by competing with chloride for binding. Functionally, electroneutral sodium and chloride ion cotransporter, which acts as a key mediator of sodium and chloride reabsorption in kidney distal convoluted tubules. Also acts as a receptor for the pro-inflammatory cytokine IL18, thereby contributing to IL18-induced cytokine production, including IFNG, IL6, IL18 and CCL2. May act either independently of IL18R1, or in a complex with IL18R1. The chain is Solute carrier family 12 member 3 from Mus musculus (Mouse).